Reading from the N-terminus, the 263-residue chain is Zinc import ATP-binding protein ZnuC (263 aa).

The ABC transporter domain maps to 11–226 (VELKNINVVF…PTFIHFFGDQ (216 aa)). Position 43-50 (43-50 (GPNGGGKS)) interacts with ATP.

Belongs to the ABC transporter superfamily. Zinc importer (TC 3.A.1.15.5) family. In terms of assembly, the complex is composed of two ATP-binding proteins (ZnuC), two transmembrane proteins (ZnuB) and a solute-binding protein (ZnuA).

The protein localises to the cell inner membrane. It catalyses the reaction Zn(2+)(out) + ATP(in) + H2O(in) = Zn(2+)(in) + ADP(in) + phosphate(in) + H(+)(in). Its function is as follows. Part of the ABC transporter complex ZnuABC involved in zinc import. Responsible for energy coupling to the transport system. The polypeptide is Zinc import ATP-binding protein ZnuC (Pasteurella multocida (strain Pm70)).